The following is a 757-amino-acid chain: RNA-directed RNA polymerase catalytic subunit (757 aa).

Positions 50-81 are disordered; sequence SEKGKWTTNTETGAPQLNPIDGPLPEDNEPSG. A compositionally biased stretch (polar residues) spans 55–64; it reads WTTNTETGAP. 2 short sequence motifs (nuclear localization signal) span residues 187–195 and 203–216; these read RKRRVRDNM and RTIG…NKRS. Positions 249–256 are promoter-binding site; sequence RGFVYFVE. One can recognise a RdRp catalytic domain in the interval 286 to 483; it reads VRKMMTNSQD…GINMSKKKSY (198 aa).

Belongs to the influenza viruses polymerase PB1 family. In terms of assembly, influenza RNA polymerase is composed of three subunits: PB1, PB2 and PA. Interacts (via N-terminus) with PA (via C-terminus). Interacts (via C-terminus) with PB2 (via N-terminus); this interaction is essential for transcription initiation. Post-translationally, phosphorylated by host PRKCA.

The protein localises to the host nucleus. Its subcellular location is the host cytoplasm. It carries out the reaction RNA(n) + a ribonucleoside 5'-triphosphate = RNA(n+1) + diphosphate. RNA-dependent RNA polymerase which is responsible for replication and transcription of virus RNA segments. The transcription of viral mRNAs occurs by a unique mechanism called cap-snatching. 5' methylated caps of cellular mRNAs are cleaved after 10-13 nucleotides by PA. In turn, these short capped RNAs are used as primers by PB1 for transcription of viral mRNAs. During virus replication, PB1 initiates RNA synthesis and copy vRNA into complementary RNA (cRNA) which in turn serves as a template for the production of more vRNAs. The protein is RNA-directed RNA polymerase catalytic subunit of Influenza A virus (strain A/Swine/Colorado/1/1977 H3N2).